We begin with the raw amino-acid sequence, 227 residues long: Cytochrome c oxidase subunit 2 (227 aa).

Topologically, residues 1 to 14 (MAYPMQLGLQDATS) are mitochondrial intermembrane. The chain crosses the membrane as a helical span at residues 15-45 (PIMEELMNFHDHTLMIVFLISSLVLYLISLM). Topologically, residues 46–59 (LTTKLIHTNTMDAQ) are mitochondrial matrix. A helical transmembrane segment spans residues 60 to 87 (EVETIWTILPAIILVLIALPSLRILYMM). At 88–227 (DEINNPVLTV…FFENWSSSMT (140 aa)) the chain is on the mitochondrial intermembrane side. Residues histidine 161, cysteine 196, glutamate 198, cysteine 200, histidine 204, and methionine 207 each contribute to the Cu cation site. Glutamate 198 lines the Mg(2+) pocket.

Belongs to the cytochrome c oxidase subunit 2 family. Component of the cytochrome c oxidase (complex IV, CIV), a multisubunit enzyme composed of 14 subunits. The complex is composed of a catalytic core of 3 subunits MT-CO1, MT-CO2 and MT-CO3, encoded in the mitochondrial DNA, and 11 supernumerary subunits COX4I, COX5A, COX5B, COX6A, COX6B, COX6C, COX7A, COX7B, COX7C, COX8 and NDUFA4, which are encoded in the nuclear genome. The complex exists as a monomer or a dimer and forms supercomplexes (SCs) in the inner mitochondrial membrane with NADH-ubiquinone oxidoreductase (complex I, CI) and ubiquinol-cytochrome c oxidoreductase (cytochrome b-c1 complex, complex III, CIII), resulting in different assemblies (supercomplex SCI(1)III(2)IV(1) and megacomplex MCI(2)III(2)IV(2)). Found in a complex with TMEM177, COA6, COX18, COX20, SCO1 and SCO2. Interacts with TMEM177 in a COX20-dependent manner. Interacts with COX20. Interacts with COX16. Requires Cu cation as cofactor.

The protein resides in the mitochondrion inner membrane. It carries out the reaction 4 Fe(II)-[cytochrome c] + O2 + 8 H(+)(in) = 4 Fe(III)-[cytochrome c] + 2 H2O + 4 H(+)(out). Its function is as follows. Component of the cytochrome c oxidase, the last enzyme in the mitochondrial electron transport chain which drives oxidative phosphorylation. The respiratory chain contains 3 multisubunit complexes succinate dehydrogenase (complex II, CII), ubiquinol-cytochrome c oxidoreductase (cytochrome b-c1 complex, complex III, CIII) and cytochrome c oxidase (complex IV, CIV), that cooperate to transfer electrons derived from NADH and succinate to molecular oxygen, creating an electrochemical gradient over the inner membrane that drives transmembrane transport and the ATP synthase. Cytochrome c oxidase is the component of the respiratory chain that catalyzes the reduction of oxygen to water. Electrons originating from reduced cytochrome c in the intermembrane space (IMS) are transferred via the dinuclear copper A center (CU(A)) of subunit 2 and heme A of subunit 1 to the active site in subunit 1, a binuclear center (BNC) formed by heme A3 and copper B (CU(B)). The BNC reduces molecular oxygen to 2 water molecules using 4 electrons from cytochrome c in the IMS and 4 protons from the mitochondrial matrix. The protein is Cytochrome c oxidase subunit 2 (MT-CO2) of Desmodillus auricularis (Cape short-eared gerbil).